Reading from the N-terminus, the 622-residue chain is Dehydrogenase xptC (622 aa).

The N-terminal stretch at 1-18 is a signal peptide; sequence MAKLSVILLFRSLLLCGA. FAD is bound by residues 47-48, 68-69, and 123-126; these read VS, EA, and NAMI. Asparagine 160, asparagine 173, asparagine 357, asparagine 364, and asparagine 480 each carry an N-linked (GlcNAc...) asparagine glycan. 598–599 contributes to the FAD binding site; that stretch reads PM.

The protein belongs to the GMC oxidoreductase family. In terms of assembly, homodimer. FAD is required as a cofactor.

Its pathway is secondary metabolite biosynthesis. Functionally, dehydrogenase involved in the conversion of monodictyphenone to the prenyl xanthones such as emericellin, shamixanthone and epishamixanthone. Monodictyphenone is first converted to variecoxanthone A via a paeciloxanthone intermediate by the consecutive actions of the FAD-dependent monooxygenase mdpD and the xanthone prenyltransferase xptB. XptB catalyzes regular O-prenylation at the hydroxy group of C-7 of the xanthone ring. Variecoxanthone A is further prenylated to emericellin by xptA before being reduced to shamixanthone and epishamixanthone by the dehydrogenase xptC. This chain is Dehydrogenase xptC, found in Emericella nidulans (strain FGSC A4 / ATCC 38163 / CBS 112.46 / NRRL 194 / M139) (Aspergillus nidulans).